Consider the following 265-residue polypeptide: GTP cyclohydrolase 1 type 2 homolog (265 aa).

His65, Asp103, His225, and Glu228 together coordinate a divalent metal cation.

The protein belongs to the GTP cyclohydrolase I type 2/NIF3 family. In terms of assembly, homohexamer.

This Streptococcus pneumoniae serotype 4 (strain ATCC BAA-334 / TIGR4) protein is GTP cyclohydrolase 1 type 2 homolog.